A 325-amino-acid chain; its full sequence is DNA-directed RNA polymerase subunit alpha (325 aa).

The segment at 1 to 231 is alpha N-terminal domain (alpha-NTD); it reads MQTSLLKPKI…DQLSVFAALE (231 aa). The alpha C-terminal domain (alpha-CTD) stretch occupies residues 246 to 325; sequence IDPILLRPVD…ENWPPAGLDK (80 aa).

Belongs to the RNA polymerase alpha chain family. As to quaternary structure, homodimer. The RNAP catalytic core consists of 2 alpha, 1 beta, 1 beta' and 1 omega subunit. When a sigma factor is associated with the core the holoenzyme is formed, which can initiate transcription.

The enzyme catalyses RNA(n) + a ribonucleoside 5'-triphosphate = RNA(n+1) + diphosphate. DNA-dependent RNA polymerase catalyzes the transcription of DNA into RNA using the four ribonucleoside triphosphates as substrates. This chain is DNA-directed RNA polymerase subunit alpha, found in Paraburkholderia phymatum (strain DSM 17167 / CIP 108236 / LMG 21445 / STM815) (Burkholderia phymatum).